Here is a 147-residue protein sequence, read N- to C-terminus: Hemoglobin subunit beta-1 (147 aa).

The Globin domain occupies 3–147; it reads EWTAAERRHV…VVSALGRQYH (145 aa). Heme b-binding residues include His64 and His93.

Belongs to the globin family. In terms of assembly, hb 1 is a heterotetramer of two alpha-1 and two beta-1 chains. Red blood cells.

In terms of biological role, involved in oxygen transport from gills to the various peripheral tissues. The sequence is that of Hemoglobin subunit beta-1 (hbb1) from Gadus morhua (Atlantic cod).